Here is a 220-residue protein sequence, read N- to C-terminus: Endonuclease NucS (220 aa).

It belongs to the NucS endonuclease family.

The protein resides in the cytoplasm. Functionally, cleaves both 3' and 5' ssDNA extremities of branched DNA structures. This Parafrankia sp. (strain EAN1pec) protein is Endonuclease NucS.